A 484-amino-acid polypeptide reads, in one-letter code: Tribbles (484 aa).

Residues 1–23 show a composition bias toward polar residues; it reads MDNSSGQNSRTASSASTSKIVNY. The segment at 1 to 51 is disordered; sequence MDNSSGQNSRTASSASTSKIVNYSSPVSPGVAAATSSSSSSSSSGMSSSQE. Residues 24-49 show a composition bias toward low complexity; it reads SSPVSPGVAAATSSSSSSSSSGMSSS. A Protein kinase domain is found at 129–397; it reads YRHLVDLTAS…ASHIFLTPWL (269 aa). Composition is skewed to acidic residues over residues 420–437 and 475–484; these read AEED…DEEG and PEPDTDVDMG. Disordered regions lie at residues 420–443 and 464–484; these read AEED…PLGD and MAQN…VDMG.

It belongs to the protein kinase superfamily. CAMK Ser/Thr protein kinase family. Tribbles subfamily. Interacts with slbo. Interacts with Akt1. As to expression, expressed throughout the brain with highest levels of expression detected in the cell body rind and lower levels of expression detected in the neurophil (at protein level).

It is found in the nucleus. It localises to the cytoplasm. Its subcellular location is the cell cortex. In terms of biological role, adapter protein that negatively regulates different signaling pathways to coordinate cell differentiation, proliferation, migration and growth. Functions by binding to key regulatory proteins and either blocks their activity or regulates their turnover by the proteasome. In various developing tissues functions as a cell cycle regulator that mediates cell proliferation according to the requirements of the developmental program. Acts by inducing the proteasomal degradation of the CD25 mitotic activators stg and twe at critical stages of development to delay entry into mitosis and thus mediate cell proliferation. During gastrulation, negatively regulates stg to delay mitosis in the ventral region of the embryonic mesoderm thus allowing invagination to be completed before cell division takes place. Delaying stg-dependent mitosis during bristle development and in migrating germline pole cells also arrests their cell divisions, whereas in cystocytes it promotes their cell divisions. Involved in the regulation of the mid-blastula transition; promotes the destruction of twe resulting in the cell cycle arrest in G2 of cycle 14 which delays mitosis and thus reduces cell proliferation allowing cell fate specification and morphogenesis to take place. In germline cells, blocks border cell migration during oogenesis by binding to slbo/C/EBP and promoting its ubiquitination and degradation by the proteasome. May function in a negative feedback loop with slbo to coordinate proper border cell migration. During tissue growth negatively regulates insulin signaling by binding to Akt1 and blocking its phosphorylation-dependent activation. However it may also function downstream in the insulin signaling pathway, acting with Akt1 to direct foxo degradation. Essential for the proper formation of operant place and aversive olfactory memories. This chain is Tribbles, found in Drosophila melanogaster (Fruit fly).